Reading from the N-terminus, the 62-residue chain is MGMRMMFTVFLLVALATTVASFTLDRASNGRNAAADDKPSDWIALAIKQCCANPPCKHVNCR.

The first 21 residues, 1 to 21 (MGMRMMFTVFLLVALATTVAS), serve as a signal peptide directing secretion. Positions 22 to 48 (FTLDRASNGRNAAADDKPSDWIALAIK) are excised as a propeptide. Position 49 is a pyrrolidone carboxylic acid (Gln-49). 2 disulfides stabilise this stretch: Cys-50–Cys-56 and Cys-51–Cys-61.

The protein belongs to the conotoxin A superfamily. As to expression, expressed by the venom duct.

Its subcellular location is the secreted. In terms of biological role, alpha-conotoxins bind to the nicotinic acetylcholine receptors (nAChR) and inhibit them. This synthetic peptide (10 uM) selectively, but weakly inhibits both rat neuronal alpha-3-beta-2/CHRNA3-CHRNB2 (63%) and alpha-3-beta-4/CHRNA3-CHRNB4 (37%) subtypes of nAChR. The chain is Alpha-conotoxin-like Qc1.2 from Conus quercinus (Oak cone).